Reading from the N-terminus, the 330-residue chain is Peroxisomal membrane protein PEX13 (330 aa).

The span at 1-14 (MSAPPTNQPPPLPP) shows a compositional bias: pro residues. Positions 1–20 (MSAPPTNQPPPLPPRSFDNQ) are disordered. The helical transmembrane segment at 193–213 (ASVNWPAALFWVVAIGGPWLI) threads the bilayer. Residues 235–300 (APHYTAQALF…PINYVRIVGK (66 aa)) enclose the SH3 domain.

The protein belongs to the peroxin-13 family. As to quaternary structure, interacts with PEX14/prx-14; forming the PEX13-PEX14 docking complex.

It is found in the peroxisome membrane. In terms of biological role, component of the PEX13-PEX14 docking complex, a translocon channel that specifically mediates the import of peroxisomal cargo proteins bound to PEX5/prx-5 receptor. The PEX13-PEX14 docking complex forms a large import pore which can be opened to a diameter of about 9 nm. Mechanistically, PEX5/prx-5 receptor along with cargo proteins associates with the PEX14/prx-14 subunit of the PEX13-PEX14 docking complex in the cytosol, leading to the insertion of the receptor into the organelle membrane with the concomitant translocation of the cargo into the peroxisome matrix. In Caenorhabditis elegans, this protein is Peroxisomal membrane protein PEX13 (prx-13).